Consider the following 699-residue polypeptide: Elongation factor G 2 (699 aa).

Residues 8–290 (ERYRNIGICA…AVIEYLPSPT (283 aa)) enclose the tr-type G domain. GTP-binding positions include 17 to 24 (AHVDAGKT), 88 to 92 (DTPGH), and 142 to 145 (NKMD).

The protein belongs to the TRAFAC class translation factor GTPase superfamily. Classic translation factor GTPase family. EF-G/EF-2 subfamily.

It localises to the cytoplasm. In terms of biological role, catalyzes the GTP-dependent ribosomal translocation step during translation elongation. During this step, the ribosome changes from the pre-translocational (PRE) to the post-translocational (POST) state as the newly formed A-site-bound peptidyl-tRNA and P-site-bound deacylated tRNA move to the P and E sites, respectively. Catalyzes the coordinated movement of the two tRNA molecules, the mRNA and conformational changes in the ribosome. In Colwellia psychrerythraea (strain 34H / ATCC BAA-681) (Vibrio psychroerythus), this protein is Elongation factor G 2.